The sequence spans 510 residues: Beta-galactosidase (510 aa).

The active-site Proton donor is the Glu-210. The Nucleophile role is filled by Glu-414.

This sequence belongs to the glycosyl hydrolase 1 family.

The catalysed reaction is Hydrolysis of terminal non-reducing beta-D-galactose residues in beta-D-galactosides.. In Pyrococcus woesei, this protein is Beta-galactosidase.